A 75-amino-acid polypeptide reads, in one-letter code: MASSCELCCEIFIAILLPPVGVCLRHGCCTVEFFICLILTCLGYLPGIIYAIYAICFLHRDEYFDEYRRPIYYVA.

2 consecutive transmembrane segments (helical) span residues 4–24 (SCEL…GVCL) and 33–53 (FFIC…YAIY).

This sequence belongs to the UPF0057 (PMP3) family.

It is found in the membrane. The chain is UPF0057 membrane protein At2g24040 from Arabidopsis thaliana (Mouse-ear cress).